Consider the following 155-residue polypeptide: Ribosomal RNA large subunit methyltransferase H (155 aa).

S-adenosyl-L-methionine is bound by residues leucine 73, glycine 104, and leucine 123–leucine 128.

It belongs to the RNA methyltransferase RlmH family. Homodimer.

It localises to the cytoplasm. It carries out the reaction pseudouridine(1915) in 23S rRNA + S-adenosyl-L-methionine = N(3)-methylpseudouridine(1915) in 23S rRNA + S-adenosyl-L-homocysteine + H(+). Functionally, specifically methylates the pseudouridine at position 1915 (m3Psi1915) in 23S rRNA. The sequence is that of Ribosomal RNA large subunit methyltransferase H from Pseudomonas entomophila (strain L48).